We begin with the raw amino-acid sequence, 317 residues long: Putative peptide import ATP-binding protein BruAb2_0797 (317 aa).

The ABC transporter domain occupies 7-250; the sequence is LSVRGLAKHY…PQHPYTRALL (244 aa). Residue 43–50 coordinates ATP; that stretch reads GESGSGKT.

This sequence belongs to the ABC transporter superfamily. As to quaternary structure, the complex is composed of two ATP-binding proteins (BruAb2_0796 and BruAb2_0797), two transmembrane proteins (BruAb2_0794) and a solute-binding protein (BruAb2_0792).

The protein localises to the cell inner membrane. Its function is as follows. Probably part of an ABC transporter complex that could be involved in peptide import. Probably responsible for energy coupling to the transport system. The chain is Putative peptide import ATP-binding protein BruAb2_0797 from Brucella abortus biovar 1 (strain 9-941).